A 488-amino-acid chain; its full sequence is Glutamyl-tRNA(Gln) amidotransferase subunit A (488 aa).

Residues Lys-80 and Ser-155 each act as charge relay system in the active site. Ser-179 (acyl-ester intermediate) is an active-site residue.

The protein belongs to the amidase family. GatA subfamily. As to quaternary structure, heterotrimer of A, B and C subunits.

It carries out the reaction L-glutamyl-tRNA(Gln) + L-glutamine + ATP + H2O = L-glutaminyl-tRNA(Gln) + L-glutamate + ADP + phosphate + H(+). Functionally, allows the formation of correctly charged Gln-tRNA(Gln) through the transamidation of misacylated Glu-tRNA(Gln) in organisms which lack glutaminyl-tRNA synthetase. The reaction takes place in the presence of glutamine and ATP through an activated gamma-phospho-Glu-tRNA(Gln). The protein is Glutamyl-tRNA(Gln) amidotransferase subunit A of Chloroflexus aggregans (strain MD-66 / DSM 9485).